The following is a 328-amino-acid chain: Methionyl-tRNA formyltransferase (328 aa).

Residue 121-124 (SLLP) coordinates (6S)-5,6,7,8-tetrahydrofolate.

Belongs to the Fmt family.

The enzyme catalyses L-methionyl-tRNA(fMet) + (6R)-10-formyltetrahydrofolate = N-formyl-L-methionyl-tRNA(fMet) + (6S)-5,6,7,8-tetrahydrofolate + H(+). Attaches a formyl group to the free amino group of methionyl-tRNA(fMet). The formyl group appears to play a dual role in the initiator identity of N-formylmethionyl-tRNA by promoting its recognition by IF2 and preventing the misappropriation of this tRNA by the elongation apparatus. This chain is Methionyl-tRNA formyltransferase, found in Paraburkholderia xenovorans (strain LB400).